Consider the following 281-residue polypeptide: Tryptophan 2,3-dioxygenase (281 aa).

Residues 50–54 (FIIQH), Y112, and R116 contribute to the substrate site. H239 provides a ligand contact to heme. T253 serves as a coordination point for substrate.

The protein belongs to the tryptophan 2,3-dioxygenase family. As to quaternary structure, homotetramer. Requires heme as cofactor.

It catalyses the reaction L-tryptophan + O2 = N-formyl-L-kynurenine. Its pathway is amino-acid degradation; L-tryptophan degradation via kynurenine pathway; L-kynurenine from L-tryptophan: step 1/2. Heme-dependent dioxygenase that catalyzes the oxidative cleavage of the L-tryptophan (L-Trp) pyrrole ring and converts L-tryptophan to N-formyl-L-kynurenine. Catalyzes the oxidative cleavage of the indole moiety. In Saccharopolyspora erythraea (strain ATCC 11635 / DSM 40517 / JCM 4748 / NBRC 13426 / NCIMB 8594 / NRRL 2338), this protein is Tryptophan 2,3-dioxygenase.